We begin with the raw amino-acid sequence, 427 residues long: MHECLTLNPISLVNGTINLPGSKSITNRALLLSAMSNSTTHLKNILYSQDTQYMLNTLKICGIKFNCSYTNLSCTIEGCNKPLNISHKTSLFLGNAGTAFRSLAAIFSLNNNNILLTGNKRMKQRPIKHLVQALQQGGAQITYSEQDQYPPIKIKGGFIGGNIFVSGKISSQFLSALLIATPLAQLDSTITVTEKLVSKPYIDITLNLISKFGIKIIHKDYTKFNVQGRQKYISPKEYSIEGDASSASYFLAAAAIKGGSVKVTGIGLNSIQGDVKFANVLKKMGAYITFGKDFIVCKKKDLIGIDLDMNDIPDAAMTIAIVALFSKGKTVIRNIYNWRVKETDRLSAMTNELKKIGAQVIEGNDYIEILPPINFVYAKINTYDDHRIAMCFALIALSGIKVTLLNYKCVNKTFPDYFQKLKSICSY.

The 3-phosphoshikimate site is built by lysine 23, serine 24, and arginine 28. Lysine 23 contributes to the phosphoenolpyruvate binding site. Glycine 97 and arginine 125 together coordinate phosphoenolpyruvate. 7 residues coordinate 3-phosphoshikimate: serine 170, serine 171, glutamine 172, serine 198, aspartate 314, asparagine 337, and lysine 341. A phosphoenolpyruvate-binding site is contributed by glutamine 172. Aspartate 314 serves as the catalytic Proton acceptor. 3 residues coordinate phosphoenolpyruvate: arginine 345, arginine 387, and lysine 412.

Belongs to the EPSP synthase family. In terms of assembly, monomer.

It is found in the cytoplasm. The catalysed reaction is 3-phosphoshikimate + phosphoenolpyruvate = 5-O-(1-carboxyvinyl)-3-phosphoshikimate + phosphate. It participates in metabolic intermediate biosynthesis; chorismate biosynthesis; chorismate from D-erythrose 4-phosphate and phosphoenolpyruvate: step 6/7. Catalyzes the transfer of the enolpyruvyl moiety of phosphoenolpyruvate (PEP) to the 5-hydroxyl of shikimate-3-phosphate (S3P) to produce enolpyruvyl shikimate-3-phosphate and inorganic phosphate. This Buchnera aphidicola subsp. Baizongia pistaciae (strain Bp) protein is 3-phosphoshikimate 1-carboxyvinyltransferase.